The sequence spans 414 residues: Arrestin domain-containing protein 3 (414 aa).

Short sequence motifs (PPxY motif) lie at residues 346–349 (PPSY) and 391–394 (PPLY). The tract at residues 393 to 414 (LYSEIDPNPDQSADDRPSCPSR) is disordered. Residues 405-414 (ADDRPSCPSR) show a composition bias toward basic and acidic residues.

The protein belongs to the arrestin family. As to quaternary structure, interacts (via PPxY motifs) with NEDD4 (via WW domains). Interacts with ADRB2. Interacts with ADRB3. Interacts with HGS (via PPxY motifs). Does not bind TXN (thioredoxin). Interacts with ITCH. Interacts with WWP1 (via WW domains). Highly expressed in skeletal muscle, placenta, kidney, lung, liver, blood, adrenal gland, lymph node, mammary gland, thyroid, and trachea. Very low levels in colon, thymus, spleen, small intestine, bladder and bone marrow. Strong expression in differentiated adipocytes compared to preadipocytes. Detected in omental fat and subcutaneous fat tissue.

The protein resides in the cytoplasm. It is found in the cell membrane. Its subcellular location is the lysosome. The protein localises to the endosome. It localises to the early endosome. Adapter protein that plays a role in regulating cell-surface expression of adrenergic receptors and probably also other G protein-coupled receptors. Plays a role in NEDD4-mediated ubiquitination and endocytosis af activated ADRB2 and subsequent ADRB2 degradation. May recruit NEDD4 to ADRB2. Alternatively, may function as adapter protein that does not play a major role in recruiting NEDD4 to ADRB2, but rather plays a role in a targeting ADRB2 to endosomes. The polypeptide is Arrestin domain-containing protein 3 (ARRDC3) (Homo sapiens (Human)).